The primary structure comprises 654 residues: Beta-mannosyltransferase 2 (654 aa).

Topologically, residues 1-37 are cytoplasmic; sequence MLAWLRHRIRSYNTSTYSSILPSASFGKVYKIGTKLN. The helical transmembrane segment at 38–58 threads the bilayer; sequence FTLLALCLLLACSVFFNYFYL. Residues 59–654 are Extracellular-facing; the sequence is ADNNGLDIDT…ANGNGKGSSS (596 aa).

This sequence belongs to the BMT family.

It is found in the membrane. Its function is as follows. Beta-mannosyltransferase involved in cell wall biosynthesis. Required for the addition of beta-mannose to the acid-labile fraction of cell wall phosphopeptidomannan. In Candida albicans (strain SC5314 / ATCC MYA-2876) (Yeast), this protein is Beta-mannosyltransferase 2 (RHD1).